Reading from the N-terminus, the 308-residue chain is Ribonuclease HIII (308 aa).

An RNase H type-2 domain is found at F88–Q304. D94, E95, and D199 together coordinate a divalent metal cation.

It belongs to the RNase HII family. RnhC subfamily. The cofactor is Mn(2+). Mg(2+) serves as cofactor.

It is found in the cytoplasm. It catalyses the reaction Endonucleolytic cleavage to 5'-phosphomonoester.. Endonuclease that specifically degrades the RNA of RNA-DNA hybrids. In Staphylococcus epidermidis (strain ATCC 12228 / FDA PCI 1200), this protein is Ribonuclease HIII.